The primary structure comprises 406 residues: Phosphorylase b kinase gamma catalytic chain, liver/testis isoform (406 aa).

Residues 24-291 (YDPKDVIGRG…AEQALQHPFF (268 aa)) form the Protein kinase domain. ATP is bound by residues 30 to 38 (IGRGVSSVV) and Lys-53. Residue Asp-153 is the Proton acceptor of the active site. The calmodulin-binding (domain-N) stretch occupies residues 306 to 330 (QRFRVAVWTVLAAGRVALSTHRVRP). Ser-345 carries the post-translational modification Phosphoserine. The interval 346–370 (VRHLIDNCAFRLYGHWVKKGEQQNR) is calmodulin-binding (domain-C).

The protein belongs to the protein kinase superfamily. CAMK Ser/Thr protein kinase family. As to quaternary structure, hexadecamer of 4 heterotetramers, each composed of alpha, beta, gamma, and delta subunits. Alpha (PHKA1 or PHKA2) and beta (PHKB) are regulatory subunits, gamma (PHKG1 or PHKG2) is the catalytic subunit, and delta is calmodulin.

The enzyme catalyses 2 ATP + phosphorylase b = 2 ADP + phosphorylase a.. Its function is as follows. Catalytic subunit of the phosphorylase b kinase (PHK), which mediates the neural and hormonal regulation of glycogen breakdown (glycogenolysis) by phosphorylating and thereby activating glycogen phosphorylase. May regulate glycogeneolysis in the testis. In vitro, phosphorylates PYGM. This chain is Phosphorylase b kinase gamma catalytic chain, liver/testis isoform (PHKG2), found in Homo sapiens (Human).